A 333-amino-acid chain; its full sequence is Methylosome protein WDR77 (333 aa).

WD repeat units lie at residues 16-59 (CMEV…GAPN), 68-106 (QTEA…SLLV), 113-152 (EHDD…VLKS), 155-195 (AHSS…PATR), 199-240 (CASD…SAQT), 243-283 (VHSQ…VFRD), and 285-328 (SHRD…NLIA).

In terms of assembly, heterotetramer; dimer of heterodimer with prmt5. Interacts with histone h2a and h4 and with nucleoplasmin. Detected in egg (at protein level).

The protein localises to the cytoplasm. The protein resides in the nucleus. In terms of biological role, non-catalytic component of the 20S prmt5-containing methyltransferase complex, which modifies specific arginines to dimethylarginines in several spliceosomal Sm proteins and histones. Required for normal prmt5 methyltransferase activity. The chain is Methylosome protein WDR77 from Xenopus laevis (African clawed frog).